The following is a 274-amino-acid chain: Cytochrome b-c1 complex subunit Rieske, mitochondrial (274 aa).

Topologically, residues Ser-79–Ser-103 are mitochondrial matrix. The chain crosses the membrane as a helical span at residues Arg-104–Met-140. The Mitochondrial intermembrane portion of the chain corresponds to Ser-141–Gly-274. Positions Glu-187 to Ile-272 constitute a Rieske domain. [2Fe-2S] cluster contacts are provided by Cys-217, His-219, Cys-236, His-239, and Ser-241. A disulfide bridge links Cys-222 with Cys-238.

Belongs to the Rieske iron-sulfur protein family. As to quaternary structure, component of the ubiquinol-cytochrome c oxidoreductase (cytochrome b-c1 complex, complex III, CIII), a multisubunit enzyme composed of 11 subunits. The complex is composed of 3 respiratory subunits cytochrome b, cytochrome c1 and Rieske protein UQCRFS1, 2 core protein subunits UQCRC1/QCR1 and UQCRC2/QCR2, and 6 low-molecular weight protein subunits UQCRH/QCR6, UQCRB/QCR7, UQCRQ/QCR8, UQCR10/QCR9, UQCR11/QCR10 and subunit 9, the cleavage product of Rieske protein UQCRFS1. The complex exists as an obligatory dimer and forms supercomplexes (SCs) in the inner mitochondrial membrane with NADH-ubiquinone oxidoreductase (complex I, CI) and cytochrome c oxidase (complex IV, CIV), resulting in different assemblies (supercomplex SCI(1)III(2)IV(1) and megacomplex MCI(2)III(2)IV(2)). Incorporation of the Rieske protein UQCRFS1 is the penultimate step in complex III assembly. Interacts with TTC19, which is involved in the clearance of UQCRFS1 fragments. In terms of assembly, component of the ubiquinol-cytochrome c oxidoreductase (cytochrome b-c1 complex, complex III, CIII). Subunit 9 corresponds to the mitochondrial targeting sequence (MTS) of Rieske protein UQCRFS1. It is retained after processing and incorporated inside complex III, where it remains bound to the complex and localizes between the 2 core subunits UQCRC1/QCR1 and UQCRC2/QCR2. It depends on [2Fe-2S] cluster as a cofactor. Post-translationally, proteolytic processing is necessary for the correct insertion of UQCRFS1 in the complex III dimer. Several fragments are generated during UQCRFS1 insertion, most probably due to the endogenous matrix-processing peptidase (MPP) activity of the 2 core protein subunits UQCRC1/QCR1 and UQCRC2/QCR2, which are homologous to the 2 mitochondrial-processing peptidase (MPP) subunits beta-MPP and alpha-MPP respectively. The action of the protease is also necessary for the clearance of the UQCRFS1 fragments.

Its subcellular location is the mitochondrion inner membrane. The catalysed reaction is a quinol + 2 Fe(III)-[cytochrome c](out) = a quinone + 2 Fe(II)-[cytochrome c](out) + 2 H(+)(out). Component of the ubiquinol-cytochrome c oxidoreductase, a multisubunit transmembrane complex that is part of the mitochondrial electron transport chain which drives oxidative phosphorylation. The respiratory chain contains 3 multisubunit complexes succinate dehydrogenase (complex II, CII), ubiquinol-cytochrome c oxidoreductase (cytochrome b-c1 complex, complex III, CIII) and cytochrome c oxidase (complex IV, CIV), that cooperate to transfer electrons derived from NADH and succinate to molecular oxygen, creating an electrochemical gradient over the inner membrane that drives transmembrane transport and the ATP synthase. The cytochrome b-c1 complex catalyzes electron transfer from ubiquinol to cytochrome c, linking this redox reaction to translocation of protons across the mitochondrial inner membrane, with protons being carried across the membrane as hydrogens on the quinol. In the process called Q cycle, 2 protons are consumed from the matrix, 4 protons are released into the intermembrane space and 2 electrons are passed to cytochrome c. The Rieske protein is a catalytic core subunit containing a [2Fe-2S] iron-sulfur cluster. It cycles between 2 conformational states during catalysis to transfer electrons from the quinol bound in the Q(0) site in cytochrome b to cytochrome c1. Incorporation of UQCRFS1 is the penultimate step in complex III assembly. Its function is as follows. Component of the ubiquinol-cytochrome c oxidoreductase (cytochrome b-c1 complex, complex III, CIII). UQCRFS1 undergoes proteolytic processing once it is incorporated in the complex III dimer. One of the fragments, called subunit 9, corresponds to its mitochondrial targeting sequence (MTS). The proteolytic processing is necessary for the correct insertion of UQCRFS1 in the complex III dimer, but the persistence of UQCRFS1-derived fragments may prevent newly imported UQCRFS1 to be processed and assembled into complex III and is detrimental for the complex III structure and function. The protein is Cytochrome b-c1 complex subunit Rieske, mitochondrial (UQCRFS1) of Symphalangus syndactylus (Siamang).